The primary structure comprises 847 residues: Alanine--tRNA ligase (847 aa).

Residues histidine 554, histidine 558, cysteine 656, and histidine 660 each coordinate Zn(2+).

It belongs to the class-II aminoacyl-tRNA synthetase family. Zn(2+) is required as a cofactor.

The protein resides in the cytoplasm. The enzyme catalyses tRNA(Ala) + L-alanine + ATP = L-alanyl-tRNA(Ala) + AMP + diphosphate. Functionally, catalyzes the attachment of alanine to tRNA(Ala) in a two-step reaction: alanine is first activated by ATP to form Ala-AMP and then transferred to the acceptor end of tRNA(Ala). Also edits incorrectly charged Ser-tRNA(Ala) and Gly-tRNA(Ala) via its editing domain. This is Alanine--tRNA ligase from Helicobacter pylori (strain ATCC 700392 / 26695) (Campylobacter pylori).